The following is a 281-amino-acid chain: Probable endonuclease 4 (281 aa).

Zn(2+) contacts are provided by histidine 69, histidine 109, glutamate 145, aspartate 179, histidine 182, histidine 216, aspartate 229, histidine 231, and glutamate 261.

It belongs to the AP endonuclease 2 family. Zn(2+) is required as a cofactor.

The enzyme catalyses Endonucleolytic cleavage to 5'-phosphooligonucleotide end-products.. Functionally, endonuclease IV plays a role in DNA repair. It cleaves phosphodiester bonds at apurinic or apyrimidinic (AP) sites, generating a 3'-hydroxyl group and a 5'-terminal sugar phosphate. This Chlorobaculum tepidum (strain ATCC 49652 / DSM 12025 / NBRC 103806 / TLS) (Chlorobium tepidum) protein is Probable endonuclease 4.